The chain runs to 565 residues: Thiol:disulfide interchange protein DsbD (565 aa).

The first 19 residues, 1-19, serve as a signal peptide directing secretion; it reads MAQRIFTLILLLCSTSVFA. At 20 to 162 the chain is on the periplasmic side; the sequence is GLFDAPGRSQ…VPQQEQPTAQ (143 aa). 2 cysteine pairs are disulfide-bonded: C122–C128 and C182–C304. The chain crosses the membrane as a helical span at residues 163–183; that stretch reads LPFSALWALLIGIGIAFTPCV. Residues 184–207 lie on the Cytoplasmic side of the membrane; it reads LPMYPLISGIVLGGKQRLSTARAL. Residues 208–228 traverse the membrane as a helical segment; the sequence is LLTFIYVQGMALTYTALGLVV. At 229–242 the chain is on the periplasmic side; it reads AAAGLQFQAALQHP. Residues 243 to 263 form a helical membrane-spanning segment; sequence YVLIGLTIVFTLLAMSMFGLL. Residues 264–295 lie on the Cytoplasmic side of the membrane; it reads TLQLPSSLQTRLTLMSNRQQGGSPGGVFIMGT. A helical transmembrane segment spans residues 296–316; it reads IAGLICSPCTTAPLSAILLYI. Over 317–322 the chain is Periplasmic; sequence AQSGNM. The chain crosses the membrane as a helical span at residues 323–343; it reads WLGGGTLYLYALGMGLPLMLI. The Cytoplasmic portion of the chain corresponds to 344–356; that stretch reads TVFGNRLLPKSGP. A helical transmembrane segment spans residues 357-377; it reads WMEQVKTAFGFVILALPVFLL. Topologically, residues 378-383 are periplasmic; the sequence is ERVIGD. Residues 384-404 form a helical membrane-spanning segment; that stretch reads VWGLRLWSALGVAFFGWAFIT. Residues 405 to 417 are Cytoplasmic-facing; sequence SLQAKRGWMRVVQ. A helical transmembrane segment spans residues 418–438; the sequence is IILLAAALVSVRPLQDWAFGA. Residues 434 to 565 form the Thioredoxin domain; sequence WAFGATHTAQ…FSAHLRDRQP (132 aa). Residues 439 to 565 are Periplasmic-facing; it reads THTAQTQTHL…FSAHLRDRQP (127 aa). Cysteines 480 and 483 form a disulfide.

Belongs to the thioredoxin family. DsbD subfamily.

The protein resides in the cell inner membrane. It carries out the reaction [protein]-dithiol + NAD(+) = [protein]-disulfide + NADH + H(+). The catalysed reaction is [protein]-dithiol + NADP(+) = [protein]-disulfide + NADPH + H(+). In terms of biological role, required to facilitate the formation of correct disulfide bonds in some periplasmic proteins and for the assembly of the periplasmic c-type cytochromes. Acts by transferring electrons from cytoplasmic thioredoxin to the periplasm. This transfer involves a cascade of disulfide bond formation and reduction steps. In Escherichia coli O157:H7, this protein is Thiol:disulfide interchange protein DsbD.